The primary structure comprises 263 residues: Shikimate dehydrogenase (NADP(+)) (263 aa).

Shikimate-binding positions include 16–18 (SKS) and Thr65. Lys69 (proton acceptor) is an active-site residue. Shikimate is bound by residues Asn90 and Asp105. NADP(+) contacts are provided by residues 125 to 129 (GSGGS) and Leu208. Tyr210 contributes to the shikimate binding site. NADP(+) is bound at residue Gly230.

It belongs to the shikimate dehydrogenase family. Homodimer.

The catalysed reaction is shikimate + NADP(+) = 3-dehydroshikimate + NADPH + H(+). It functions in the pathway metabolic intermediate biosynthesis; chorismate biosynthesis; chorismate from D-erythrose 4-phosphate and phosphoenolpyruvate: step 4/7. Functionally, involved in the biosynthesis of the chorismate, which leads to the biosynthesis of aromatic amino acids. Catalyzes the reversible NADPH linked reduction of 3-dehydroshikimate (DHSA) to yield shikimate (SA). The protein is Shikimate dehydrogenase (NADP(+)) of Helicobacter acinonychis (strain Sheeba).